The following is a 121-amino-acid chain: Large ribosomal subunit protein bL20 (121 aa).

Belongs to the bacterial ribosomal protein bL20 family.

Its function is as follows. Binds directly to 23S ribosomal RNA and is necessary for the in vitro assembly process of the 50S ribosomal subunit. It is not involved in the protein synthesizing functions of that subunit. The chain is Large ribosomal subunit protein bL20 from Persephonella marina (strain DSM 14350 / EX-H1).